The primary structure comprises 108 residues: Colipase B (108 aa).

The N-terminal stretch at 1-13 (LALLLVALAVAYA) is a signal peptide. Residues 14–18 (VPDPR) constitute a propeptide, enterostatin, activation peptide. 5 disulfide bridges follow: Cys-30-Cys-41, Cys-36-Cys-52, Cys-40-Cys-74, Cys-62-Cys-82, and Cys-76-Cys-100. Taurodeoxycholate is bound at residue Trp-65.

The protein belongs to the colipase family. In terms of assembly, forms a 1:1 stoichiometric complex with pancreatic lipase. Expressed by the pancreas.

The protein resides in the secreted. Functionally, colipase is a cofactor of pancreatic lipase. It allows the lipase to anchor itself to the lipid-water interface. Without colipase the enzyme is washed off by bile salts, which have an inhibitory effect on the lipase. Its function is as follows. Enterostatin has a biological activity as a satiety signal. This is Colipase B (CLPS2) from Equus caballus (Horse).